We begin with the raw amino-acid sequence, 504 residues long: Maturase K (504 aa).

Belongs to the intron maturase 2 family. MatK subfamily.

It localises to the plastid. It is found in the chloroplast. Functionally, usually encoded in the trnK tRNA gene intron. Probably assists in splicing its own and other chloroplast group II introns. The sequence is that of Maturase K from Quercus gemelliflora (Pasang hiris).